A 498-amino-acid chain; its full sequence is Calcium-binding tyrosine phosphorylation-regulated protein (498 aa).

The RIIa domain maps to 12 to 49 (YGLKTLLEGVSRAILKINPPNITQFAAVYFKELIVFRE). Disordered regions lie at residues 74–107 (GTTQ…TDTE), 135–164 (EETP…SPAA), and 247–279 (VDLG…AYDQ). Positions 145-164 (SPKPSTPKAVTPPSSPSPAA) are enriched in low complexity.

Interacts with FSCB. In terms of processing, phosphorylated on tyrosine residues during in vitro capacitation. Dephosphorylation affects its ability to bind calcium. Expressed in testis.

It localises to the cytoplasm. It is found in the cytoskeleton. The protein resides in the cell projection. Its subcellular location is the cilium. The protein localises to the flagellum. Its function is as follows. May function as a regulator of both motility- and head-associated functions such as capacitation and the acrosome reaction. Binds calcium in vitro. The polypeptide is Calcium-binding tyrosine phosphorylation-regulated protein (CABYR) (Vulpes vulpes (Red fox)).